A 140-amino-acid polypeptide reads, in one-letter code: Large ribosomal subunit protein uL24 (140 aa).

It belongs to the universal ribosomal protein uL24 family. In terms of assembly, part of the 50S ribosomal subunit.

Its function is as follows. One of two assembly initiator proteins, it binds directly to the 5'-end of the 23S rRNA, where it nucleates assembly of the 50S subunit. Functionally, located at the polypeptide exit tunnel on the outside of the subunit. The protein is Large ribosomal subunit protein uL24 of Nanoarchaeum equitans (strain Kin4-M).